Here is a 257-residue protein sequence, read N- to C-terminus: Lipopolysaccharide core biosynthesis glycosyltransferase KdtX (257 aa).

The protein belongs to the glycosyltransferase 2 family. WaaE/KdtX subfamily.

The protein operates within bacterial outer membrane biogenesis; LPS core biosynthesis. This is Lipopolysaccharide core biosynthesis glycosyltransferase KdtX (kdtX) from Serratia marcescens.